The primary structure comprises 85 residues: UPF0512 protein U (85 aa).

It belongs to the UPF0512 family.

The polypeptide is UPF0512 protein U (Dictyostelium discoideum (Social amoeba)).